The following is an 833-amino-acid chain: Bifunctional dethiobiotin synthetase/7,8-diamino-pelargonic acid aminotransferase, mitochondrial (833 aa).

The transit peptide at 1-23 directs the protein to the mitochondrion; the sequence is MIPVTATLIRHRLRHLRHRIRFK. The segment at 36 to 299 is dethiobiotin synthetase; that stretch reads HPTYLIWSAN…VLVLPPVPKD (264 aa). 47 to 52 is an ATP binding site; it reads SLGKTL. Threonine 51 is a Mg(2+) binding site. Residue threonine 81 participates in substrate binding. Residue aspartate 88 coordinates Mg(2+). ATP-binding positions include aspartate 97, 210–213, and 270–271; these read ETAG and ED. Glutamate 210 contributes to the Mg(2+) binding site. Positions 332 to 830 are 7,8-diamino-pelargonic acid aminotransferase; sequence RLNGMAKLAG…TKLYKRLGEF (499 aa). 391–392 contributes to the (8S)-8-amino-7-oxononanoate binding site; sequence WW. A pyridoxal 5'-phosphate-binding site is contributed by 453 to 454; the sequence is GS. Tyrosine 495 provides a ligand contact to (8S)-8-amino-7-oxononanoate. Residues 518–520 and glutamate 545 contribute to the ATP site; that span reads PWY. Aspartate 637 is a pyridoxal 5'-phosphate binding site. Residues lysine 666 and glycine 700 each contribute to the (8S)-8-amino-7-oxononanoate site. N6-(pyridoxal phosphate)lysine is present on lysine 666. Residue 701 to 702 participates in pyridoxal 5'-phosphate binding; it reads HS. (8S)-8-amino-7-oxononanoate is bound at residue arginine 797.

This sequence in the N-terminal section; belongs to the dethiobiotin synthetase family. The protein in the C-terminal section; belongs to the class-III pyridoxal-phosphate-dependent aminotransferase family. BioA subfamily. As to quaternary structure, homodimer. It depends on Mg(2+) as a cofactor. Pyridoxal 5'-phosphate is required as a cofactor.

It is found in the mitochondrion matrix. The enzyme catalyses (7R,8S)-7,8-diammoniononanoate + CO2 + ATP = (4R,5S)-dethiobiotin + ADP + phosphate + 3 H(+). It carries out the reaction (8S)-8-amino-7-oxononanoate + S-adenosyl-L-methionine = S-adenosyl-4-methylsulfanyl-2-oxobutanoate + (7R,8S)-7,8-diammoniononanoate. It participates in cofactor biosynthesis; biotin biosynthesis; biotin from 7,8-diaminononanoate: step 1/2. It functions in the pathway cofactor biosynthesis; biotin biosynthesis; 7,8-diaminononanoate from 8-amino-7-oxononanoate (SAM route): step 1/1. Bifunctional enzyme that catalyzes two different reactions involved in the biotin biosynthesis. Its function is as follows. Catalyzes a mechanistically unusual reaction, the ATP-dependent insertion of CO2 between the N7 and N8 nitrogen atoms of 7,8-diaminopelargonic acid (DAPA) to form an ureido ring. In terms of biological role, catalyzes the transfer of the alpha-amino group from S-adenosyl-L-methionine (SAM) to 7-keto-8-aminopelargonic acid (KAPA) to form 7,8-diaminopelargonic acid (DAPA). It is the only aminotransferase known to utilize SAM as an amino donor. The chain is Bifunctional dethiobiotin synthetase/7,8-diamino-pelargonic acid aminotransferase, mitochondrial from Arabidopsis thaliana (Mouse-ear cress).